Reading from the N-terminus, the 102-residue chain is NADH-quinone oxidoreductase subunit K (102 aa).

Transmembrane regions (helical) follow at residues 5 to 25, 31 to 51, and 66 to 86; these read IAHYLTVSAIMFTVGIFGIFL, IIILMSIELILLSVNLNFVAF, and FILTVAAAEAAIGLAILVVFF.

The protein belongs to the complex I subunit 4L family. NDH-1 is composed of 14 different subunits. Subunits NuoA, H, J, K, L, M, N constitute the membrane sector of the complex.

It is found in the cell inner membrane. The enzyme catalyses a quinone + NADH + 5 H(+)(in) = a quinol + NAD(+) + 4 H(+)(out). Its function is as follows. NDH-1 shuttles electrons from NADH, via FMN and iron-sulfur (Fe-S) centers, to quinones in the respiratory chain. The immediate electron acceptor for the enzyme in this species is believed to be ubiquinone. Couples the redox reaction to proton translocation (for every two electrons transferred, four hydrogen ions are translocated across the cytoplasmic membrane), and thus conserves the redox energy in a proton gradient. The sequence is that of NADH-quinone oxidoreductase subunit K from Bartonella bacilliformis (strain ATCC 35685 / KC583 / Herrer 020/F12,63).